Consider the following 181-residue polypeptide: ATP synthase subunit delta (181 aa).

This sequence belongs to the ATPase delta chain family. F-type ATPases have 2 components, F(1) - the catalytic core - and F(0) - the membrane proton channel. F(1) has five subunits: alpha(3), beta(3), gamma(1), delta(1), epsilon(1). F(0) has three main subunits: a(1), b(2) and c(10-14). The alpha and beta chains form an alternating ring which encloses part of the gamma chain. F(1) is attached to F(0) by a central stalk formed by the gamma and epsilon chains, while a peripheral stalk is formed by the delta and b chains.

The protein localises to the cell inner membrane. F(1)F(0) ATP synthase produces ATP from ADP in the presence of a proton or sodium gradient. F-type ATPases consist of two structural domains, F(1) containing the extramembraneous catalytic core and F(0) containing the membrane proton channel, linked together by a central stalk and a peripheral stalk. During catalysis, ATP synthesis in the catalytic domain of F(1) is coupled via a rotary mechanism of the central stalk subunits to proton translocation. Its function is as follows. This protein is part of the stalk that links CF(0) to CF(1). It either transmits conformational changes from CF(0) to CF(1) or is implicated in proton conduction. In Fervidobacterium nodosum (strain ATCC 35602 / DSM 5306 / Rt17-B1), this protein is ATP synthase subunit delta.